The primary structure comprises 378 residues: Ribosomal RNA large subunit methyltransferase G (378 aa).

Belongs to the methyltransferase superfamily. RlmG family.

It localises to the cytoplasm. It catalyses the reaction guanosine(1835) in 23S rRNA + S-adenosyl-L-methionine = N(2)-methylguanosine(1835) in 23S rRNA + S-adenosyl-L-homocysteine + H(+). Specifically methylates the guanine in position 1835 (m2G1835) of 23S rRNA. This is Ribosomal RNA large subunit methyltransferase G from Salmonella arizonae (strain ATCC BAA-731 / CDC346-86 / RSK2980).